Here is a 60-residue protein sequence, read N- to C-terminus: Regulatory protein DegR (60 aa).

In terms of biological role, stabilizes the phosphorylated form of DegU, leading to enhanced production of levansucrase, alkaline protease, and neutral protease. This chain is Regulatory protein DegR (degR), found in Bacillus subtilis subsp. natto.